The primary structure comprises 214 residues: tRNA (guanine-N(7)-)-methyltransferase (214 aa).

Residues Glu44, Glu69, Asp96, and Asp118 each coordinate S-adenosyl-L-methionine. Asp118 is an active-site residue. Substrate-binding positions include Lys122, Asp154, and Thr191–Glu194.

This sequence belongs to the class I-like SAM-binding methyltransferase superfamily. TrmB family.

The catalysed reaction is guanosine(46) in tRNA + S-adenosyl-L-methionine = N(7)-methylguanosine(46) in tRNA + S-adenosyl-L-homocysteine. The protein operates within tRNA modification; N(7)-methylguanine-tRNA biosynthesis. Catalyzes the formation of N(7)-methylguanine at position 46 (m7G46) in tRNA. The sequence is that of tRNA (guanine-N(7)-)-methyltransferase from Listeria monocytogenes serotype 4b (strain F2365).